The following is a 624-amino-acid chain: Outer dynein arm-docking complex subunit 4 (624 aa).

8 TPR repeats span residues 11–44 (FPSY…QSGD), 46–78 (NCLV…DPTF), 79–112 (CKGI…RPDR), 273–309 (LKSL…NQEE), 318–351 (GNLY…AKEH), 358–391 (SRAL…AKTT), 395–428 (TWLF…AEEE), and 435–468 (LNAS…AKLV). Positions 511–624 (MSQMDLQGAS…VQKLEKTKEE (114 aa)) are disordered. Basic and acidic residues-rich tracts occupy residues 520-557 (SEKE…DRKS), 576-588 (IRRE…RRLS), and 595-624 (PSED…TKEE).

Component of the outer dynein arm-docking complex along with ODAD1, ODAD2, and ODAD3. Interacts with ODAD1; this interaction may facilitate the recruitment and/or attachment of outer dynein arm docking complex proteins, including ODAD1, ODAD3 and ODAD2, to ciliary axonemes. Interacts with components of the IFT complex A, including IFT140, TTC21B/IFT139 and WDR19/IFT144, and the IFT complex B, including IFT46, IFT52 and IFT57. Interacts with CFAP53.

The protein resides in the cell projection. It is found in the cilium. The protein localises to the cytoplasm. It localises to the cytoskeleton. Its subcellular location is the cilium axoneme. Its function is as follows. Component of the outer dynein arm-docking complex (ODA-DC) that mediates outer dynein arms (ODA) binding onto the doublet microtubule. Plays an essential role for the assembly of ODA-DC and for the docking of ODA in ciliary axoneme. In Mus musculus (Mouse), this protein is Outer dynein arm-docking complex subunit 4 (Odad4).